The sequence spans 96 residues: uncharacterized protein (96 aa).

2 helical membrane passes run 27–47 (LYTV…FFFF) and 52–72 (MSAG…RPTI).

Its subcellular location is the cell membrane. This is an uncharacterized protein from Bacillus subtilis (strain 168).